The sequence spans 691 residues: Hormonally up-regulated neu tumor-associated kinase homolog A (691 aa).

A Protein kinase domain is found at 55–313 (YLIGRKLGEG…IQQALANRWL (259 aa)). Residues 61–69 (LGEGSFAKV) and K84 each bind ATP. D179 acts as the Proton acceptor in catalysis. Basic and acidic residues predominate over residues 406–425 (MNKNSYEERRSKDLEKRGEP). 4 disordered regions span residues 406 to 475 (MNKN…GGLS), 499 to 518 (QSPD…HSQE), 580 to 640 (FQFD…SRGR), and 655 to 679 (QVVS…SPGY). Positions 440–453 (SHRQNACLTPQGHS) are enriched in polar residues. The span at 457–470 (PVKERRSSKSERES) shows a compositional bias: basic and acidic residues. The segment covering 582–597 (FDNTSPSKSHFNQASF) has biased composition (polar residues). A compositionally biased stretch (low complexity) spans 604–620 (SPSSPESMSPTSPHSPS). Residues 621–631 (CNNNISGNLGS) are compositionally biased toward polar residues.

Belongs to the protein kinase superfamily. CAMK Ser/Thr protein kinase family. SNF1 subfamily.

It carries out the reaction L-seryl-[protein] + ATP = O-phospho-L-seryl-[protein] + ADP + H(+). It catalyses the reaction L-threonyl-[protein] + ATP = O-phospho-L-threonyl-[protein] + ADP + H(+). In Xenopus laevis (African clawed frog), this protein is Hormonally up-regulated neu tumor-associated kinase homolog A (hunk-a).